The chain runs to 484 residues: Cobyric acid synthase (484 aa).

The 188-residue stretch at 251 to 438 (ALKIAVPVLS…LHGLFGNDEY (188 aa)) folds into the GATase cobBQ-type domain. C333 (nucleophile) is an active-site residue. Residue H430 is part of the active site.

Belongs to the CobB/CobQ family. CobQ subfamily.

Its pathway is cofactor biosynthesis; adenosylcobalamin biosynthesis. In terms of biological role, catalyzes amidations at positions B, D, E, and G on adenosylcobyrinic A,C-diamide. NH(2) groups are provided by glutamine, and one molecule of ATP is hydrogenolyzed for each amidation. This is Cobyric acid synthase from Allorhizobium ampelinum (strain ATCC BAA-846 / DSM 112012 / S4) (Agrobacterium vitis (strain S4)).